The chain runs to 702 residues: Polyribonucleotide nucleotidyltransferase (702 aa).

Residues D493 and D499 each contribute to the Mg(2+) site. Residues 559 to 619 enclose the KH domain; that stretch reads PKVEIFNVDP…NLISQSKEYI (61 aa). The region spanning 643–702 is the S1 motif domain; it reads GEEFLGRVQKVVEFGVFVELKEGVDGLLHNSKIKEKLEVGHEIKVKVAEIKNGKVSLDLA.

The protein belongs to the polyribonucleotide nucleotidyltransferase family. The cofactor is Mg(2+).

It localises to the cytoplasm. The enzyme catalyses RNA(n+1) + phosphate = RNA(n) + a ribonucleoside 5'-diphosphate. Its function is as follows. Involved in mRNA degradation. Catalyzes the phosphorolysis of single-stranded polyribonucleotides processively in the 3'- to 5'-direction. This is Polyribonucleotide nucleotidyltransferase from Campylobacter lari (strain RM2100 / D67 / ATCC BAA-1060).